A 245-amino-acid polypeptide reads, in one-letter code: 1-(5-phosphoribosyl)-5-[(5-phosphoribosylamino)methylideneamino] imidazole-4-carboxamide isomerase (245 aa).

Aspartate 7 functions as the Proton acceptor in the catalytic mechanism. The active-site Proton donor is the aspartate 129.

Belongs to the HisA/HisF family.

It is found in the cytoplasm. It carries out the reaction 1-(5-phospho-beta-D-ribosyl)-5-[(5-phospho-beta-D-ribosylamino)methylideneamino]imidazole-4-carboxamide = 5-[(5-phospho-1-deoxy-D-ribulos-1-ylimino)methylamino]-1-(5-phospho-beta-D-ribosyl)imidazole-4-carboxamide. It functions in the pathway amino-acid biosynthesis; L-histidine biosynthesis; L-histidine from 5-phospho-alpha-D-ribose 1-diphosphate: step 4/9. This is 1-(5-phosphoribosyl)-5-[(5-phosphoribosylamino)methylideneamino] imidazole-4-carboxamide isomerase from Shewanella sp. (strain MR-7).